The chain runs to 585 residues: Parathyroid hormone/parathyroid hormone-related peptide receptor (585 aa).

Residues 1 to 26 (MGAPRISHSLALLLCCSVLSSVYALV) form the signal peptide. At 27–185 (DADDVITKEE…REREVFDRLG (159 aa)) the chain is on the extracellular side. 3 cysteine pairs are disulfide-bonded: Cys48–Cys114, Cys105–Cys145, and Cys128–Cys167. Residues 69–90 (MSRSAKTKKEKPAEKLYSQAEE) form a disordered region. N-linked (GlcNAc...) asparagine glycans are attached at residues Asn148, Asn158, Asn163, and Asn173. The helical transmembrane segment at 186-209 (MIYTVGYSISLGSLTVAVLILGYF) threads the bilayer. The Cytoplasmic portion of the chain corresponds to 210 to 216 (RRLHCTR). Residues 217-236 (NYIHMHLFVSFMLRAVSIFI) form a helical membrane-spanning segment. Over 237 to 276 (KDAVLYSGVSTDEIERITEEELRAFTEPPPADKAGFVGCR) the chain is Extracellular. A helical transmembrane segment spans residues 277 to 300 (VAVTVFLYFLTTNYYWILVEGLYL). Over 301–314 (HSLIFMAFFSEKKY) the chain is Cytoplasmic. A helical transmembrane segment spans residues 315–336 (LWGFTLFGWGLPAVFVAVWVTV). Residues 337–355 (RATLANTECWDLSSGNKKW) are Extracellular-facing. Residues 356–376 (IIQVPILAAIVVNFILFINII) form a helical membrane-spanning segment. Topologically, residues 377–403 (RVLATKLRETNAGRCDTRQQYRKLLKS) are cytoplasmic. The helical transmembrane segment at 404-422 (TLVLMPLFGVHYIVFMATP) threads the bilayer. At 423–434 (YTEVSGILWQVQ) the chain is on the extracellular side. Residues 435-457 (MHYEMLFNSFQGFFVAIIYCFCN) traverse the membrane as a helical segment. The Cytoplasmic segment spans residues 458 to 585 (GEVQAEIKKS…LLEEERETVM (128 aa)). The Important for interaction with G proteins signature appears at 468–471 (WSRW). Residues 531 to 585 (PGYVKHGSISENSLPSSGPEPGTKDDGYLNGSGLYEPMVGEQPPPLLEEERETVM) form a disordered region.

It belongs to the G-protein coupled receptor 2 family. As to quaternary structure, homodimer in the absence of bound ligand. Peptide hormone binding leads to dissociation of the homodimer. Post-translationally, N-glycosylated.

It is found in the cell membrane. Functionally, G-protein-coupled receptor for parathyroid hormone (PTH) and for parathyroid hormone-related peptide (PTHLH). Ligand binding causes a conformation change that triggers signaling via guanine nucleotide-binding proteins (G proteins) and modulates the activity of downstream effectors, such as adenylate cyclase (cAMP). PTH1R is coupled to G(s) G alpha proteins and mediates activation of adenylate cyclase activity. PTHLH dissociates from PTH1R more rapidly than PTH; as consequence, the cAMP response induced by PTHLH decays faster than the response induced by PTH. The chain is Parathyroid hormone/parathyroid hormone-related peptide receptor (PTH1R) from Didelphis virginiana (North American opossum).